The chain runs to 449 residues: tRNA-2-methylthio-N(6)-dimethylallyladenosine synthase (449 aa).

One can recognise an MTTase N-terminal domain in the interval 3 to 118 (KKVFVKTFGC…LPELLAQREA (116 aa)). Residues C12, C49, C81, C155, C159, and C162 each coordinate [4Fe-4S] cluster. A Radical SAM core domain is found at 141–376 (RVEGASAFVS…VINANIKSIS (236 aa)). In terms of domain architecture, TRAM spans 377 to 440 (ESRVGTVQRI…AYTLRGEVVT (64 aa)).

It belongs to the methylthiotransferase family. MiaB subfamily. As to quaternary structure, monomer. [4Fe-4S] cluster serves as cofactor.

It localises to the cytoplasm. It catalyses the reaction N(6)-dimethylallyladenosine(37) in tRNA + (sulfur carrier)-SH + AH2 + 2 S-adenosyl-L-methionine = 2-methylsulfanyl-N(6)-dimethylallyladenosine(37) in tRNA + (sulfur carrier)-H + 5'-deoxyadenosine + L-methionine + A + S-adenosyl-L-homocysteine + 2 H(+). Functionally, catalyzes the methylthiolation of N6-(dimethylallyl)adenosine (i(6)A), leading to the formation of 2-methylthio-N6-(dimethylallyl)adenosine (ms(2)i(6)A) at position 37 in tRNAs that read codons beginning with uridine. This is tRNA-2-methylthio-N(6)-dimethylallyladenosine synthase from Paracidovorax citrulli (strain AAC00-1) (Acidovorax citrulli).